A 395-amino-acid chain; its full sequence is Phosphopentomutase (395 aa).

Mn(2+)-binding residues include D14, D286, H291, D327, H328, and H339.

It belongs to the phosphopentomutase family. Mn(2+) is required as a cofactor.

Its subcellular location is the cytoplasm. The enzyme catalyses 2-deoxy-alpha-D-ribose 1-phosphate = 2-deoxy-D-ribose 5-phosphate. It catalyses the reaction alpha-D-ribose 1-phosphate = D-ribose 5-phosphate. Its pathway is carbohydrate degradation; 2-deoxy-D-ribose 1-phosphate degradation; D-glyceraldehyde 3-phosphate and acetaldehyde from 2-deoxy-alpha-D-ribose 1-phosphate: step 1/2. Its function is as follows. Isomerase that catalyzes the conversion of deoxy-ribose 1-phosphate (dRib-1-P) and ribose 1-phosphate (Rib-1-P) to deoxy-ribose 5-phosphate (dRib-5-P) and ribose 5-phosphate (Rib-5-P), respectively. The chain is Phosphopentomutase from Staphylococcus saprophyticus subsp. saprophyticus (strain ATCC 15305 / DSM 20229 / NCIMB 8711 / NCTC 7292 / S-41).